The primary structure comprises 427 residues: Glutamate-1-semialdehyde 2,1-aminomutase (427 aa).

Lys-265 is subject to N6-(pyridoxal phosphate)lysine.

The protein belongs to the class-III pyridoxal-phosphate-dependent aminotransferase family. HemL subfamily. Homodimer. The cofactor is pyridoxal 5'-phosphate.

It is found in the cytoplasm. It carries out the reaction (S)-4-amino-5-oxopentanoate = 5-aminolevulinate. The protein operates within porphyrin-containing compound metabolism; protoporphyrin-IX biosynthesis; 5-aminolevulinate from L-glutamyl-tRNA(Glu): step 2/2. The chain is Glutamate-1-semialdehyde 2,1-aminomutase from Edwardsiella ictaluri (strain 93-146).